Reading from the N-terminus, the 1165-residue chain is Immunoglobulin superfamily member 3 (1165 aa).

An N-terminal signal peptide occupies residues 1–20 (MGTAAGLLLAALLLAGTSWA). Residues 21 to 1095 (QREVNIQQGP…LQSTICANDA (1075 aa)) lie on the Extracellular side of the membrane. Ig-like C2-type domains lie at 22 to 139 (REVN…AKMN), 144 to 262 (PDTL…WFPL), 276 to 386 (PTDK…RGPS), 406 to 527 (PLRT…WQLL), 545 to 661 (FAVT…WTQL), 678 to 800 (PRLQ…EEAS), 810 to 934 (PDAN…WYKR), and 951 to 1067 (PALQ…WYLL). 2 disulfides stabilise this stretch: C43–C121 and C168–C246. Positions 250-252 (EWI) match the EWI motif motif. 6 disulfides stabilise this stretch: C302-C376, C432-C511, C566-C645, C701-C779, C835-C918, and C974-C1051. A helical membrane pass occupies residues 1096–1116 (LFYLVFFYPFPIFGILIITIL). The Cytoplasmic segment spans residues 1117 to 1165 (LVRFRHRPTSKPGEGKNGVPLLWIKEPHLNYSPTCLEPPVLSIHPGTID).

It localises to the membrane. In Xenopus laevis (African clawed frog), this protein is Immunoglobulin superfamily member 3 (igsf3).